Here is a 361-residue protein sequence, read N- to C-terminus: Phospho-N-acetylmuramoyl-pentapeptide-transferase (361 aa).

Transmembrane regions (helical) follow at residues 26–46 (SILA…VLIQ), 73–93 (TMGG…WGDL), 98–118 (VWLV…DDWI), 139–159 (IFGL…AAVT), 168–188 (IALP…IVGF), 200–220 (GLAI…AYAS), 237–257 (AGDL…FLWF), 264–284 (VFMG…IAVI), 289–309 (LVLV…IIQV), and 339–359 (VIVR…ATLK).

The protein belongs to the glycosyltransferase 4 family. MraY subfamily. Mg(2+) is required as a cofactor.

It localises to the cell inner membrane. It catalyses the reaction UDP-N-acetyl-alpha-D-muramoyl-L-alanyl-gamma-D-glutamyl-meso-2,6-diaminopimeloyl-D-alanyl-D-alanine + di-trans,octa-cis-undecaprenyl phosphate = di-trans,octa-cis-undecaprenyl diphospho-N-acetyl-alpha-D-muramoyl-L-alanyl-D-glutamyl-meso-2,6-diaminopimeloyl-D-alanyl-D-alanine + UMP. The protein operates within cell wall biogenesis; peptidoglycan biosynthesis. In terms of biological role, catalyzes the initial step of the lipid cycle reactions in the biosynthesis of the cell wall peptidoglycan: transfers peptidoglycan precursor phospho-MurNAc-pentapeptide from UDP-MurNAc-pentapeptide onto the lipid carrier undecaprenyl phosphate, yielding undecaprenyl-pyrophosphoryl-MurNAc-pentapeptide, known as lipid I. This chain is Phospho-N-acetylmuramoyl-pentapeptide-transferase, found in Xylella fastidiosa (strain 9a5c).